The following is a 368-amino-acid chain: 7,8-didemethyl-8-hydroxy-5-deazariboflavin synthase (368 aa).

In terms of domain architecture, Radical SAM core spans L36–N272. 3 residues coordinate [4Fe-4S] cluster: C50, C54, and C57.

Belongs to the radical SAM superfamily. CofG family. Consists of two subunits, CofG and CofH. Requires [4Fe-4S] cluster as cofactor.

The enzyme catalyses 5-amino-5-(4-hydroxybenzyl)-6-(D-ribitylimino)-5,6-dihydrouracil + S-adenosyl-L-methionine = 7,8-didemethyl-8-hydroxy-5-deazariboflavin + 5'-deoxyadenosine + L-methionine + NH4(+) + H(+). Its pathway is cofactor biosynthesis; coenzyme F0 biosynthesis. Its function is as follows. Catalyzes the radical-mediated synthesis of 7,8-didemethyl-8-hydroxy-5-deazariboflavin from 5-amino-5-(4-hydroxybenzyl)-6-(D-ribitylimino)-5,6-dihydrouracil. The polypeptide is 7,8-didemethyl-8-hydroxy-5-deazariboflavin synthase (Haloarcula marismortui (strain ATCC 43049 / DSM 3752 / JCM 8966 / VKM B-1809) (Halobacterium marismortui)).